A 443-amino-acid chain; its full sequence is Glutamate-1-semialdehyde 2,1-aminomutase (443 aa).

Positions 1–16 are enriched in low complexity; that stretch reads MSVNADSQHSNNSSHQ. A disordered region spans residues 1 to 22; the sequence is MSVNADSQHSNNSSHQASEKAF. Lysine 277 is modified (N6-(pyridoxal phosphate)lysine).

Belongs to the class-III pyridoxal-phosphate-dependent aminotransferase family. HemL subfamily. In terms of assembly, homodimer. Requires pyridoxal 5'-phosphate as cofactor.

Its subcellular location is the cytoplasm. It catalyses the reaction (S)-4-amino-5-oxopentanoate = 5-aminolevulinate. The protein operates within porphyrin-containing compound metabolism; protoporphyrin-IX biosynthesis; 5-aminolevulinate from L-glutamyl-tRNA(Glu): step 2/2. The polypeptide is Glutamate-1-semialdehyde 2,1-aminomutase (Corynebacterium jeikeium (strain K411)).